The following is a 93-amino-acid chain: MRLIREDSIEKHLVSEVRKIGGIAYKFVSPGRRGVPDRLVALPNGKIIFVECKAPGEKPTPYQLREHARLFALGHQVIVLDSQDLSSILPAVN.

A VRR-NUC domain is found at 5–84; the sequence is REDSIEKHLV…HQVIVLDSQD (80 aa).

Mg(2+) serves as cofactor.

Functionally, nuclease. In Escherichia coli (Bacteriophage APSE-1), this protein is Putative nuclease p44 (44).